Here is a 333-residue protein sequence, read N- to C-terminus: D-lactate dehydrogenase (333 aa).

NAD(+) is bound by residues 156–157, Asp176, 207–208, Asn213, 234–236, and Asp260; these read HI, VP, and VSR. Arg236 is an active-site residue. The active site involves Glu265. Residue His297 is the Proton donor of the active site.

The protein belongs to the D-isomer specific 2-hydroxyacid dehydrogenase family. Homodimer.

It catalyses the reaction (R)-lactate + NAD(+) = pyruvate + NADH + H(+). The polypeptide is D-lactate dehydrogenase (ldhA) (Lactobacillus delbrueckii subsp. bulgaricus (strain ATCC 11842 / DSM 20081 / BCRC 10696 / JCM 1002 / NBRC 13953 / NCIMB 11778 / NCTC 12712 / WDCM 00102 / Lb 14)).